The following is an 87-amino-acid chain: Small ribosomal subunit protein uS17 (87 aa).

It belongs to the universal ribosomal protein uS17 family. In terms of assembly, part of the 30S ribosomal subunit.

One of the primary rRNA binding proteins, it binds specifically to the 5'-end of 16S ribosomal RNA. The protein is Small ribosomal subunit protein uS17 of Exiguobacterium sibiricum (strain DSM 17290 / CCUG 55495 / CIP 109462 / JCM 13490 / 255-15).